We begin with the raw amino-acid sequence, 757 residues long: RNA-directed RNA polymerase catalytic subunit (757 aa).

A disordered region spans residues 50–82 (SEKGKWTTNTETGAPQLNPIDGPLPEDNEPSGY). The span at 55 to 64 (WTTNTETGAP) shows a compositional bias: polar residues. Short sequence motifs (nuclear localization signal) lie at residues 187–195 (RKRRVRDNM) and 203–216 (RTIG…NKRS). A promoter-binding site region spans residues 249-256 (RGFVYFVE). Residues 286–483 (VRKMMTNSQD…GINMSKKKSY (198 aa)) enclose the RdRp catalytic domain.

Belongs to the influenza viruses polymerase PB1 family. Influenza RNA polymerase is composed of three subunits: PB1, PB2 and PA. Interacts (via N-terminus) with PA (via C-terminus). Interacts (via C-terminus) with PB2 (via N-terminus); this interaction is essential for transcription initiation. Phosphorylated by host PRKCA.

It localises to the host nucleus. Its subcellular location is the host cytoplasm. It catalyses the reaction RNA(n) + a ribonucleoside 5'-triphosphate = RNA(n+1) + diphosphate. In terms of biological role, RNA-dependent RNA polymerase which is responsible for replication and transcription of virus RNA segments. The transcription of viral mRNAs occurs by a unique mechanism called cap-snatching. 5' methylated caps of cellular mRNAs are cleaved after 10-13 nucleotides by PA. In turn, these short capped RNAs are used as primers by PB1 for transcription of viral mRNAs. During virus replication, PB1 initiates RNA synthesis and copy vRNA into complementary RNA (cRNA) which in turn serves as a template for the production of more vRNAs. This is RNA-directed RNA polymerase catalytic subunit from Influenza A virus (strain A/Chicken/Hong Kong/715.5/2001 H5N1 genotype E).